The following is an 89-amino-acid chain: Small ribosomal subunit protein uS14A (89 aa).

Residues 34 to 54 (ESLRKLPRDSNPNRLKNRDKI) form a disordered region.

The protein belongs to the universal ribosomal protein uS14 family. Part of the 30S ribosomal subunit. Contacts proteins S3 and S10.

Binds 16S rRNA, required for the assembly of 30S particles and may also be responsible for determining the conformation of the 16S rRNA at the A site. The chain is Small ribosomal subunit protein uS14A from Streptococcus pyogenes serotype M1.